A 1330-amino-acid polypeptide reads, in one-letter code: Paired amphipathic helix protein Sin3-like 3 (1330 aa).

2 consecutive PAH domains span residues Gln8 to Gly78 and Lys94 to Thr164. The segment covering Ile191 to Leu246 has biased composition (basic and acidic residues). Residues Ile191–Lys281 are disordered. Polar residues predominate over residues Ile262–Thr277. The 69-residue stretch at Ala283–Cys351 folds into the PAH 3 domain. Disordered regions lie at residues Gly373–His401, Asn718–Ser775, Lys789–Arg808, Gln882–Asp906, and Ser920–Cys1002. Basic and acidic residues predominate over residues Asp383 to His401. Over residues Ser723–Ser734 the composition is skewed to low complexity. Residues Lys789 to Ser800 show a composition bias toward basic and acidic residues. The segment covering Ser920 to Gly932 has biased composition (polar residues). 2 stretches are compositionally biased toward basic and acidic residues: residues Asp933–Asn949 and Asn956–Tyr968. The segment covering Gly980–Asp989 has biased composition (acidic residues). At Ser996 the chain carries Phosphoserine.

As to quaternary structure, interacts with ERF7 and the histone deacetylase HDA19.

The protein localises to the nucleus. In terms of biological role, acts as a transcriptional repressor. Interacts with ERF7 to repress genes in abscisic acid and drought stress responses. The heterodimer represses transcription by tethering SNL3 to DNA. The protein is Paired amphipathic helix protein Sin3-like 3 (SNL3) of Arabidopsis thaliana (Mouse-ear cress).